A 425-amino-acid chain; its full sequence is NAC transcription factor ONAC010 (425 aa).

The span at 1 to 10 (MESPDSSSGS) shows a compositional bias: polar residues. Positions 1–34 (MESPDSSSGSAPPRVLRRQQQQPGSAPELPPGFR) are disordered. Low complexity predominate over residues 12 to 23 (PPRVLRRQQQQP). Residues 29 to 200 (LPPGFRFHPT…DWVLCRIYKK (172 aa)) enclose the NAC domain. Residues 129-206 (VGVKKALVFY…IYKKTNKAGA (78 aa)) mediate DNA binding.

The protein localises to the nucleus. Its function is as follows. Transcription factor of the NAC family associated with male fertility. This is NAC transcription factor ONAC010 (ONAC010) from Oryza sativa subsp. indica (Rice).